Reading from the N-terminus, the 412-residue chain is Diphosphomevalonate decarboxylase MVD1, peroxisomal (412 aa).

Position 23–26 (23–26 (YWGK)) interacts with (R)-5-diphosphomevalonate. Residues 40–48 (SVTLDPDHL) carry the Peroxisomal targeting signal PTS2 motif. (R)-5-diphosphomevalonate-binding positions include Arg-78, 161 to 166 (SGSACR), and Thr-217.

Belongs to the diphosphomevalonate decarboxylase family. Homodimer.

The protein localises to the peroxisome. The catalysed reaction is (R)-5-diphosphomevalonate + ATP = isopentenyl diphosphate + ADP + phosphate + CO2. The protein operates within isoprenoid biosynthesis; isopentenyl diphosphate biosynthesis via mevalonate pathway; isopentenyl diphosphate from (R)-mevalonate: step 3/3. In terms of biological role, performs the first committed step in the biosynthesis of isoprene-containing compounds such as sterols and terpenoids. Is specific for (R)-5-diphosphomevalonate (MVAPP). The catalytic efficiency with (R)-5-phosphomevalonate (MVAP) as substrate is 10000-fold lower than for MVAPP. Can complement a yeast mutant defective in MVD activity. In Arabidopsis thaliana (Mouse-ear cress), this protein is Diphosphomevalonate decarboxylase MVD1, peroxisomal.